The primary structure comprises 361 residues: Queuine tRNA-ribosyltransferase (361 aa).

The Proton acceptor role is filled by aspartate 92. Substrate contacts are provided by residues 92–96 (DSGGF), aspartate 146, glutamine 189, and glycine 216. The interval 247–253 (GVGKPAD) is RNA binding. Aspartate 266 (nucleophile) is an active-site residue. The interval 271–275 (TRSGR) is RNA binding; important for wobble base 34 recognition. Cysteine 304, cysteine 306, cysteine 309, and histidine 335 together coordinate Zn(2+).

Belongs to the queuine tRNA-ribosyltransferase family. Homodimer. Within each dimer, one monomer is responsible for RNA recognition and catalysis, while the other monomer binds to the replacement base PreQ1. Zn(2+) serves as cofactor.

It carries out the reaction 7-aminomethyl-7-carbaguanine + guanosine(34) in tRNA = 7-aminomethyl-7-carbaguanosine(34) in tRNA + guanine. It participates in tRNA modification; tRNA-queuosine biosynthesis. Catalyzes the base-exchange of a guanine (G) residue with the queuine precursor 7-aminomethyl-7-deazaguanine (PreQ1) at position 34 (anticodon wobble position) in tRNAs with GU(N) anticodons (tRNA-Asp, -Asn, -His and -Tyr). Catalysis occurs through a double-displacement mechanism. The nucleophile active site attacks the C1' of nucleotide 34 to detach the guanine base from the RNA, forming a covalent enzyme-RNA intermediate. The proton acceptor active site deprotonates the incoming PreQ1, allowing a nucleophilic attack on the C1' of the ribose to form the product. After dissociation, two additional enzymatic reactions on the tRNA convert PreQ1 to queuine (Q), resulting in the hypermodified nucleoside queuosine (7-(((4,5-cis-dihydroxy-2-cyclopenten-1-yl)amino)methyl)-7-deazaguanosine). In Rickettsia akari (strain Hartford), this protein is Queuine tRNA-ribosyltransferase.